The following is a 42-amino-acid chain: Alpha-conotoxin VnIB (42 aa).

Residues 1–22 (ASDGRNAAADDKASDPIALTVR) constitute a propeptide that is removed on maturation. Cystine bridges form between C25–C31 and C26–C38. Glycine amide is present on G39.

This sequence belongs to the conotoxin A superfamily. Expressed by the venom duct.

Its subcellular location is the secreted. Alpha-conotoxins act on postsynaptic membranes, they bind to the nicotinic acetylcholine receptors (nAChR) and thus inhibit them. This toxin potently and selectively inhibits human and rat alpha-6-beta-4/CHRNA6-CHRNB4 nAChR (IC(50)=12 nM on rat nAChR). It exhibits rapid binding and unbinding at this receptor. It also shows activity on rat alpha-6-beta-4/CHRNA6-CHRNB4 (IC(50)=12 nM), human alpha-6/alpha-3-beta-4 (CHRNA6/CHRNA3-CHRNB4) (IC(50)=5.3 nM), rat alpha-6/alpha-3-beta-4 (CHRNA6/CHRNA3-CHRNB4) (IC(50)=18 nM), rat alpha-3-beta-4/CHRNA3-CHRNB4 (IC(50)=320 nM), and rat alpha-6/alpha-3-beta-2-beta-3 (CHRNA6/CHRNA3-CHRNB2-CHRNB3) (IC(50)=4 uM). In Conus ventricosus (Mediterranean cone), this protein is Alpha-conotoxin VnIB.